We begin with the raw amino-acid sequence, 74 residues long: uncharacterized protein (74 aa).

An N-terminal signal peptide occupies residues 1–19 (MNPGFDAVDQETAAAQAVA).

This is an uncharacterized protein from Mycobacterium tuberculosis (strain ATCC 25618 / H37Rv).